The sequence spans 173 residues: Crossover junction endodeoxyribonuclease RuvC (173 aa).

Residues Asp-8, Glu-67, and Asp-139 contribute to the active site. The Mg(2+) site is built by Asp-8, Glu-67, and Asp-139.

Belongs to the RuvC family. In terms of assembly, homodimer which binds Holliday junction (HJ) DNA. The HJ becomes 2-fold symmetrical on binding to RuvC with unstacked arms; it has a different conformation from HJ DNA in complex with RuvA. In the full resolvosome a probable DNA-RuvA(4)-RuvB(12)-RuvC(2) complex forms which resolves the HJ. Mg(2+) serves as cofactor.

The protein resides in the cytoplasm. It carries out the reaction Endonucleolytic cleavage at a junction such as a reciprocal single-stranded crossover between two homologous DNA duplexes (Holliday junction).. The RuvA-RuvB-RuvC complex processes Holliday junction (HJ) DNA during genetic recombination and DNA repair. Endonuclease that resolves HJ intermediates. Cleaves cruciform DNA by making single-stranded nicks across the HJ at symmetrical positions within the homologous arms, yielding a 5'-phosphate and a 3'-hydroxyl group; requires a central core of homology in the junction. The consensus cleavage sequence is 5'-(A/T)TT(C/G)-3'. Cleavage occurs on the 3'-side of the TT dinucleotide at the point of strand exchange. HJ branch migration catalyzed by RuvA-RuvB allows RuvC to scan DNA until it finds its consensus sequence, where it cleaves and resolves the cruciform DNA. The polypeptide is Crossover junction endodeoxyribonuclease RuvC (Shewanella loihica (strain ATCC BAA-1088 / PV-4)).